Consider the following 324-residue polypeptide: Putative 12-oxophytodienoate reductase-like protein 1 (324 aa).

An N-acetylmethionine modification is found at Met-1. FMN contacts are provided by residues 14–16, Ala-47, and Gln-89; that span reads PMA. Polar residues predominate over residues 99–113; it reads QDCQPNGESPVSSTD. The disordered stretch occupies residues 99–128; that stretch reads QDCQPNGESPVSSTDKPFADDPSNEFTPPR. 160–163 lines the substrate pocket; it reads HGAH. Tyr-165 acts as the Proton donor in catalysis. Residue Arg-212 coordinates FMN. Arg-252 is a binding site for substrate. FMN-binding positions include Gly-282 and 303 to 304; that span reads GR.

It belongs to the NADH:flavin oxidoreductase/NADH oxidase family. Requires FMN as cofactor.

Its function is as follows. Putative oxophytodienoate reductase that may be involved in the biosynthesis or metabolism of oxylipin signaling molecules. This chain is Putative 12-oxophytodienoate reductase-like protein 1, found in Arabidopsis thaliana (Mouse-ear cress).